The primary structure comprises 1673 residues: Leucine-rich repeat- and IQ domain-containing protein 1 (1673 aa).

2 disordered regions span residues 22 to 48 (ISIS…SDTD) and 189 to 208 (LEEK…KRTF). Residues 34-59 (NDSVSDTQSDSSDTDLLELPESVLHY) form an LRR 1 repeat. An LRR 2 repeat occupies 216–239 (QCWMRQFEVEKKHLEDLQKQDQDK). One can recognise an IQ 1 domain in the interval 291-320 (RYDAAVKIQATYRASVTYRKYSPIIKEQME). Residues 324–374 (RRAQELKEKEAKIRQKEEEKRRRLEEEQRVEEEKKKKMLEERRRREREYEE) are disordered. Positions 326–374 (AQELKEKEAKIRQKEEEKRRRLEEEQRVEEEKKKKMLEERRRREREYEE) are enriched in basic and acidic residues. The stretch at 491–516 (LPKLKINENLSKNQCSEQPSDQEFNA) is one LRR 3 repeat. Disordered stretches follow at residues 544-658 (ESDT…EEIP) and 679-702 (EGEA…GSHS). Basic and acidic residues-rich tracts occupy residues 549–567 (TEEH…ETEK) and 588–602 (EETR…EIKE). The segment covering 603–629 (MTQQGGPSDENNSSPISMQKSLPSLTP) has biased composition (polar residues). The LRR 4 repeat unit spans residues 641–665 (LEEDQETDLKSERIEEIPEEGVLSC). Residues 647-656 (TDLKSERIEE) are compositionally biased toward basic and acidic residues. 11 LRR repeats span residues 830 to 852 (CSNL…LSHC), 853 to 873 (TRLK…CENL), 874 to 894 (ENLS…GFDG), 895 to 919 (CTNL…SLKY), 921 to 939 (QELT…LCEA), 940 to 961 (PTIV…IGNC), 962 to 983 (GLLQ…LRNH), 984 to 1005 (VLLR…LSSC), 1007 to 1029 (LPLL…LFHL), 1030 to 1054 (VSLE…WFNA), and 1067 to 1090 (PVLQ…VLNG). Disordered regions lie at residues 1163–1230 (AHEQ…HCEE) and 1308–1330 (PTTT…EERR). Composition is skewed to polar residues over residues 1168–1226 (DVNT…PSTS) and 1308–1325 (PTTT…QTTS). 2 consecutive IQ domains span residues 1280–1309 (PTKA…MHPT) and 1340–1369 (REKA…AIKD). One copy of the LRR 16 repeat lies at 1378-1405 (EIDLEDFEFDEDALEKDWPALDSTGFPS).

The polypeptide is Leucine-rich repeat- and IQ domain-containing protein 1 (Lrriq1) (Mus musculus (Mouse)).